A 309-amino-acid polypeptide reads, in one-letter code: Calponin-2 (309 aa).

Ser2 is subject to N-acetylserine. An N6-acetyllysine mark is found at Lys8 and Lys25. Residues 28-132 (PQKEAELRTW…SLLALAGKAK (105 aa)) enclose the Calponin-homology (CH) domain. The residue at position 138 (Ser138) is a Phosphoserine. Calponin-like repeat units lie at residues 166–191 (IGLQMGTNKCASQSGMTAYGTRRHLY), 206–231 (ISLQMGTNKCASQVGMTAPGTRRHIY), and 245–269 (MSLQMGYTQGANQSGQVFGLGRQIY). A disordered region spans residues 283–309 (APSGTGDCPDPGEVPEYPPYYQEEAGY).

The protein belongs to the calponin family. As to expression, heart and smooth muscle.

Thin filament-associated protein that is implicated in the regulation and modulation of smooth muscle contraction. It is capable of binding to actin, calmodulin and tropomyosin. The interaction of calponin with actin inhibits the actomyosin Mg-ATPase activity. The polypeptide is Calponin-2 (CNN2) (Homo sapiens (Human)).